A 96-amino-acid polypeptide reads, in one-letter code: Protein Vpr (96 aa).

The tract at residues 1 to 42 (MEQAPEDQGPQREPYNEWTLELLEELKNEAVRHFPRIWLHSL) is homooligomerization. 3 positions are modified to phosphoserine; by host: serine 79, serine 94, and serine 96.

It belongs to the HIV-1 VPR protein family. As to quaternary structure, homooligomer, may form homodimer. Interacts with p6-gag region of the Pr55 Gag precursor protein through a (Leu-X-X)4 motif near the C-terminus of the P6gag protein. Interacts with host UNG. May interact with host RAD23A/HHR23A. Interacts with host VPRBP/DCAF1, leading to hijack the CUL4A-RBX1-DDB1-DCAF1/VPRBP complex, mediating ubiquitination of host proteins such as TERT and ZGPAT and arrest of the cell cycle in G2 phase. In terms of processing, phosphorylated on several residues by host. These phosphorylations regulate VPR activity for the nuclear import of the HIV-1 pre-integration complex.

It is found in the virion. It localises to the host nucleus. The protein resides in the host extracellular space. Its function is as follows. During virus replication, may deplete host UNG protein, and incude G2-M cell cycle arrest. Acts by targeting specific host proteins for degradation by the 26S proteasome, through association with the cellular CUL4A-DDB1 E3 ligase complex by direct interaction with host VPRPB/DCAF-1. Cell cycle arrest reportedly occurs within hours of infection and is not blocked by antiviral agents, suggesting that it is initiated by the VPR carried into the virion. Additionally, VPR induces apoptosis in a cell cycle dependent manner suggesting that these two effects are mechanistically linked. Detected in the serum and cerebrospinal fluid of AIDS patient, VPR may also induce cell death to bystander cells. Functionally, during virus entry, plays a role in the transport of the viral pre-integration (PIC) complex to the host nucleus. This function is crucial for viral infection of non-dividing macrophages. May act directly at the nuclear pore complex, by binding nucleoporins phenylalanine-glycine (FG)-repeat regions. In Homo sapiens (Human), this protein is Protein Vpr.